The chain runs to 464 residues: 3-isopropylmalate dehydratase large subunit (464 aa).

Residues cysteine 337, cysteine 397, and cysteine 400 each contribute to the [4Fe-4S] cluster site.

It belongs to the aconitase/IPM isomerase family. LeuC type 1 subfamily. In terms of assembly, heterodimer of LeuC and LeuD. [4Fe-4S] cluster serves as cofactor.

The enzyme catalyses (2R,3S)-3-isopropylmalate = (2S)-2-isopropylmalate. The protein operates within amino-acid biosynthesis; L-leucine biosynthesis; L-leucine from 3-methyl-2-oxobutanoate: step 2/4. In terms of biological role, catalyzes the isomerization between 2-isopropylmalate and 3-isopropylmalate, via the formation of 2-isopropylmaleate. This is 3-isopropylmalate dehydratase large subunit from Bacillus cereus (strain 03BB102).